The primary structure comprises 317 residues: DNA-directed RNA polymerase subunit alpha (317 aa).

The interval 1-234 (MKQFVRPEFI…AHLEFFIDLN (234 aa)) is alpha N-terminal domain (alpha-NTD). The tract at residues 250 to 317 (DKELDRTVEE…ASLGLAFRQS (68 aa)) is alpha C-terminal domain (alpha-CTD).

The protein belongs to the RNA polymerase alpha chain family. As to quaternary structure, homodimer. The RNAP catalytic core consists of 2 alpha, 1 beta, 1 beta' and 1 omega subunit. When a sigma factor is associated with the core the holoenzyme is formed, which can initiate transcription.

The catalysed reaction is RNA(n) + a ribonucleoside 5'-triphosphate = RNA(n+1) + diphosphate. Functionally, DNA-dependent RNA polymerase catalyzes the transcription of DNA into RNA using the four ribonucleoside triphosphates as substrates. The polypeptide is DNA-directed RNA polymerase subunit alpha (Mycoplasma mycoides subsp. mycoides SC (strain CCUG 32753 / NCTC 10114 / PG1)).